Consider the following 265-residue polypeptide: Acyl-[acyl-carrier-protein]--UDP-N-acetylglucosamine O-acyltransferase (265 aa).

The protein belongs to the transferase hexapeptide repeat family. LpxA subfamily. Homotrimer.

It is found in the cytoplasm. The enzyme catalyses a (3R)-hydroxyacyl-[ACP] + UDP-N-acetyl-alpha-D-glucosamine = a UDP-3-O-[(3R)-3-hydroxyacyl]-N-acetyl-alpha-D-glucosamine + holo-[ACP]. It functions in the pathway glycolipid biosynthesis; lipid IV(A) biosynthesis; lipid IV(A) from (3R)-3-hydroxytetradecanoyl-[acyl-carrier-protein] and UDP-N-acetyl-alpha-D-glucosamine: step 1/6. In terms of biological role, involved in the biosynthesis of lipid A, a phosphorylated glycolipid that anchors the lipopolysaccharide to the outer membrane of the cell. The sequence is that of Acyl-[acyl-carrier-protein]--UDP-N-acetylglucosamine O-acyltransferase from Polynucleobacter asymbioticus (strain DSM 18221 / CIP 109841 / QLW-P1DMWA-1) (Polynucleobacter necessarius subsp. asymbioticus).